Reading from the N-terminus, the 637-residue chain is 3D-(3,5/4)-trihydroxycyclohexane-1,2-dione hydrolase (637 aa).

Position 66 (E66) interacts with thiamine diphosphate. The segment at 442–522 (SLPGDLQRLW…INVLLFDNSG (81 aa)) is thiamine pyrophosphate binding. Mg(2+)-binding residues include D493 and N520.

This sequence belongs to the TPP enzyme family. It depends on Mg(2+) as a cofactor. Requires thiamine diphosphate as cofactor.

It catalyses the reaction 3D-3,5/4-trihydroxycyclohexane-1,2-dione + H2O = 5-deoxy-D-glucuronate + H(+). It participates in polyol metabolism; myo-inositol degradation into acetyl-CoA; acetyl-CoA from myo-inositol: step 3/7. Functionally, involved in the cleavage of the C1-C2 bond of 3D-(3,5/4)-trihydroxycyclohexane-1,2-dione (THcHDO) to yield 5-deoxy-glucuronate (5DG). This Bacillus subtilis (strain 168) protein is 3D-(3,5/4)-trihydroxycyclohexane-1,2-dione hydrolase (iolD).